The sequence spans 171 residues: Antimicrobial protein CAP18 (171 aa).

A signal peptide spans 1-29 (METHKHGPSLAWWSLLLLLLGLLMPPAIA). Cystine bridges form between cysteine 85/cysteine 96 and cysteine 107/cysteine 124.

The protein belongs to the cathelicidin family. As to expression, neutrophils.

Its subcellular location is the secreted. Its function is as follows. CAP18 binds to the lipid A moiety of bacterial lipopolysaccharides (LPS), a glycolipid present in the outer membrane of all Gram-negative bacteria. Has antibiotic activity. The sequence is that of Antimicrobial protein CAP18 (CAP18) from Oryctolagus cuniculus (Rabbit).